The chain runs to 60 residues: Three-finger toxin Mnn I (60 aa).

4 cysteine pairs are disulfide-bonded: cysteine 3-cysteine 22, cysteine 17-cysteine 39, cysteine 41-cysteine 52, and cysteine 53-cysteine 58.

The protein belongs to the three-finger toxin family. Short-chain subfamily. Type I alpha-neurotoxin sub-subfamily. As to expression, expressed by the venom gland.

The protein localises to the secreted. In terms of biological role, binds to muscle nicotinic acetylcholine receptor (nAChR) and inhibit acetylcholine from binding to the receptor, thereby impairing neuromuscular transmission. This is Three-finger toxin Mnn I from Micrurus nigrocinctus (Central American coral snake).